The sequence spans 351 residues: Hepatocyte nuclear factor 3-gamma (351 aa).

Pro residues predominate over residues 52–73; the sequence is PGGLPASPLPTGPLAPPAPTAP. A disordered region spans residues 52 to 94; that stretch reads PGGLPASPLPTGPLAPPAPTAPLGPTFPGLGASTGGGSSSGYG. Gly residues predominate over residues 83–94; it reads ASTGGGSSSGYG. Positions 118–212 form a DNA-binding region, fork-head; sequence KPPYSYISLI…ENGCYLRRQK (95 aa). The interval 218–275 is disordered; that stretch reads EKVKKGGGGSSASRNSAGSASTATAPAATVASTPQPQPPPPEPEAQGGDEVGALDCGS. Low complexity predominate over residues 228 to 251; the sequence is SASRNSAGSASTATAPAATVASTP.

The protein localises to the nucleus. Functionally, transcription activator for a number of liver genes such as AFP, albumin, tyrosine aminotransferase, PEPCK, etc. Interacts with the cis-acting regulatory regions of these genes. The chain is Hepatocyte nuclear factor 3-gamma (FOXA3) from Bos taurus (Bovine).